A 1940-amino-acid polypeptide reads, in one-letter code: Rho GTPase-activating protein 32 (1940 aa).

Positions 154-248 (SKELVFLVQI…LTWMEIDNKG (95 aa)) constitute a PX; atypical domain. The SH3 domain maps to 262–324 (PAIAAAHVIK…PSECVELIND (63 aa)). One can recognise a Rho-GAP domain in the interval 375-570 (CDLGEHLLNS…FILNHVEVLF (196 aa)). 5 disordered regions span residues 646-746 (FPSE…LSAS), 1035-1163 (RANQ…FSVT), 1219-1264 (FTTG…PPVR), 1430-1454 (KHPR…YTED), and 1675-1786 (RSRS…HSSA). A compositionally biased stretch (polar residues) spans 1047-1061 (PQGASASESPQELSH). Low complexity-rich tracts occupy residues 1081–1094 (LALA…QASA) and 1145–1163 (SRKT…FSVT). The span at 1691–1707 (ETKDVRYPGRTEGDERT) shows a compositional bias: basic and acidic residues. Residues 1725–1734 (PQKQSGSSRS) show a composition bias toward polar residues. The segment covering 1736–1755 (MQHDISTEQHSQDTLHRQPS) has biased composition (basic and acidic residues).

It belongs to the PX domain-containing GAP family.

Its subcellular location is the cytoplasm. It localises to the membrane. It is found in the cell membrane. GTPase-activating protein (GAP) promoting GTP hydrolysis on RHOA, CDC42 and RAC1 small GTPases. This chain is Rho GTPase-activating protein 32 (arhgap32), found in Xenopus laevis (African clawed frog).